The sequence spans 853 residues: Penicillin-binding protein 1A (853 aa).

The Cytoplasmic portion of the chain corresponds to 1–6; the sequence is MRIAKL. The helical; Signal-anchor for type II membrane protein transmembrane segment at 7 to 27 threads the bilayer; sequence ILNTLLTLCILGLVAGGMLYF. Residues 28–853 lie on the Periplasmic side of the membrane; it reads HLKSELQQPM…TPATQPQELF (826 aa). The tract at residues 37–205 is transglycosylase; sequence MQIYTADGKL…STMNPLYSLK (169 aa). Glutamate 75 (proton donor; for transglycosylase activity) is an active-site residue. The interval 387–681 is transpeptidase; sequence QRANGEWQLG…RVISGELAFL (295 aa). The active-site Acyl-ester intermediate; for transpeptidase activity is serine 441. The disordered stretch occupies residues 615-636; it reads NALKPTDDSTNGEELDQQPETV.

This sequence in the N-terminal section; belongs to the glycosyltransferase 51 family. In the C-terminal section; belongs to the transpeptidase family.

Its subcellular location is the cell inner membrane. It catalyses the reaction [GlcNAc-(1-&gt;4)-Mur2Ac(oyl-L-Ala-gamma-D-Glu-L-Lys-D-Ala-D-Ala)](n)-di-trans,octa-cis-undecaprenyl diphosphate + beta-D-GlcNAc-(1-&gt;4)-Mur2Ac(oyl-L-Ala-gamma-D-Glu-L-Lys-D-Ala-D-Ala)-di-trans,octa-cis-undecaprenyl diphosphate = [GlcNAc-(1-&gt;4)-Mur2Ac(oyl-L-Ala-gamma-D-Glu-L-Lys-D-Ala-D-Ala)](n+1)-di-trans,octa-cis-undecaprenyl diphosphate + di-trans,octa-cis-undecaprenyl diphosphate + H(+). The catalysed reaction is Preferential cleavage: (Ac)2-L-Lys-D-Ala-|-D-Ala. Also transpeptidation of peptidyl-alanyl moieties that are N-acyl substituents of D-alanine.. Its pathway is cell wall biogenesis; peptidoglycan biosynthesis. In terms of biological role, cell wall formation. Synthesis of cross-linked peptidoglycan from the lipid intermediates. The enzyme has a penicillin-insensitive transglycosylase N-terminal domain (formation of linear glycan strands) and a penicillin-sensitive transpeptidase C-terminal domain (cross-linking of the peptide subunits). The chain is Penicillin-binding protein 1A (mrcA) from Haemophilus influenzae (strain ATCC 51907 / DSM 11121 / KW20 / Rd).